The primary structure comprises 211 residues: ATP phosphoribosyltransferase (211 aa).

It belongs to the ATP phosphoribosyltransferase family. Short subfamily. In terms of assembly, heteromultimer composed of HisG and HisZ subunits.

It localises to the cytoplasm. The enzyme catalyses 1-(5-phospho-beta-D-ribosyl)-ATP + diphosphate = 5-phospho-alpha-D-ribose 1-diphosphate + ATP. It participates in amino-acid biosynthesis; L-histidine biosynthesis; L-histidine from 5-phospho-alpha-D-ribose 1-diphosphate: step 1/9. Its function is as follows. Catalyzes the condensation of ATP and 5-phosphoribose 1-diphosphate to form N'-(5'-phosphoribosyl)-ATP (PR-ATP). Has a crucial role in the pathway because the rate of histidine biosynthesis seems to be controlled primarily by regulation of HisG enzymatic activity. In Bacillus cereus (strain AH187), this protein is ATP phosphoribosyltransferase.